The following is a 332-amino-acid chain: Fe(3+) dicitrate transport system permease protein FecC (332 aa).

The Cytoplasmic portion of the chain corresponds to 1–7 (MTAIKHP). A helical membrane pass occupies residues 8 to 28 (VLLWGLPVAALIIIFWLSLFC). Topologically, residues 29-64 (YSAIPVSGADATRALLPGHTPTLPEALVQNLRLPRS) are periplasmic. A helical membrane pass occupies residues 65–85 (LVAVLIGASLALAGTLLQTLT). Over 86–100 (HNPMASPSLLGINSG) the chain is Cytoplasmic. Residues 101–121 (AALAMALTSALSPTPIAGYSL) form a helical membrane-spanning segment. A topological domain (periplasmic) is located at residue Ser122. A helical membrane pass occupies residues 123–143 (FIAACGGGVSWLLVMTAGGGF). Residues 144 to 151 (RHTHDRNK) are Cytoplasmic-facing. A helical membrane pass occupies residues 152–172 (LILAGIALSAFCMGLTRITLL). The Periplasmic segment spans residues 173–199 (LAEDHAYGIFYWLAGGVSHARWQDVWQ). The helical transmembrane segment at 200-220 (LLPVVVTAVPVVLLLANQLNL) threads the bilayer. Residues 221–244 (LNLSDSTAHTLGVNLTRLRLVINM) are Cytoplasmic-facing. Residues 245–265 (LVLLLVGACVSVAGPVAFIGL) form a helical membrane-spanning segment. Residues 266 to 307 (LVPHLARFWAGFDQRNVLPVSMLLGATLMLLADVLARALAFP) lie on the Periplasmic side of the membrane. A helical membrane pass occupies residues 308–328 (GDLPAGAVLALIGSPCFVWLV). The Cytoplasmic segment spans residues 329–332 (RRRG).

This sequence belongs to the binding-protein-dependent transport system permease family. FecCD subfamily. As to quaternary structure, the complex is composed of two ATP-binding proteins (FecE), two transmembrane proteins (FecC and FecD) and a solute-binding protein (FecB). Interacts with FecB.

The protein resides in the cell inner membrane. In terms of biological role, part of the ABC transporter complex FecBCDE involved in citrate-dependent Fe(3+) uptake. Probably responsible for the translocation of the substrate across the membrane. The polypeptide is Fe(3+) dicitrate transport system permease protein FecC (Escherichia coli (strain K12)).